The chain runs to 544 residues: Pectinesterase 3 (544 aa).

Residues Asn174, Asn257, and Asn291 are each glycosylated (N-linked (GlcNAc...) asparagine). Substrate is bound by residues Thr306 and Gln336. The active-site Proton donor is Asp359. The active-site Nucleophile is the Asp380. Residues Arg448 and Trp450 each coordinate substrate. N-linked (GlcNAc...) asparagine glycosylation is present at Asn532.

This sequence in the N-terminal section; belongs to the PMEI family. The protein in the C-terminal section; belongs to the pectinesterase family.

It is found in the secreted. Its subcellular location is the cell wall. It catalyses the reaction [(1-&gt;4)-alpha-D-galacturonosyl methyl ester](n) + n H2O = [(1-&gt;4)-alpha-D-galacturonosyl](n) + n methanol + n H(+). Its pathway is glycan metabolism; pectin degradation; 2-dehydro-3-deoxy-D-gluconate from pectin: step 1/5. Functionally, acts in the modification of cell walls via demethylesterification of cell wall pectin. In Solanum lycopersicum (Tomato), this protein is Pectinesterase 3 (PME3).